The following is an 896-amino-acid chain: DNA mismatch repair protein MutS (896 aa).

Residue 599–606 (GPNMAGKS) participates in ATP binding.

It belongs to the DNA mismatch repair MutS family.

Functionally, this protein is involved in the repair of mismatches in DNA. It is possible that it carries out the mismatch recognition step. This protein has a weak ATPase activity. This chain is DNA mismatch repair protein MutS, found in Geobacillus kaustophilus (strain HTA426).